Reading from the N-terminus, the 456-residue chain is Glycosyl hydrolase family 109 protein 2 (456 aa).

The tat-type signal signal peptide spans 1–33; that stretch reads MSGFDRRSFLKASMVTAAATALAACASSERATG. NAD(+) contacts are provided by residues 63 to 64, aspartate 85, 134 to 137, 154 to 155, and asparagine 183; these read ER, WAWH, and EV. Substrate is bound by residues tyrosine 212, arginine 231, 243–246, and tyrosine 325; that span reads YPTH. Tyrosine 243 serves as a coordination point for NAD(+).

The protein belongs to the Gfo/Idh/MocA family. Glycosyl hydrolase 109 subfamily. It depends on NAD(+) as a cofactor. Predicted to be exported by the Tat system. The position of the signal peptide cleavage has not been experimentally proven.

In terms of biological role, glycosidase. This is Glycosyl hydrolase family 109 protein 2 from Shewanella sp. (strain MR-4).